The primary structure comprises 159 residues: Endoribonuclease YbeY (159 aa).

Zn(2+) contacts are provided by His120, His124, and His130.

It belongs to the endoribonuclease YbeY family. Zn(2+) is required as a cofactor.

It is found in the cytoplasm. Functionally, single strand-specific metallo-endoribonuclease involved in late-stage 70S ribosome quality control and in maturation of the 3' terminus of the 16S rRNA. This is Endoribonuclease YbeY from Parafrankia sp. (strain EAN1pec).